A 602-amino-acid polypeptide reads, in one-letter code: Putative ankyrin repeat protein L100 (602 aa).

ANK repeat units lie at residues 133-162 (VLFY…SLIS), 269-294 (YLEK…KKSI), 295-324 (NKER…NINL), 325-354 (LKGT…DIHI), 355-384 (RDNA…DIHT), 386-414 (SSQA…DIRS), 416-444 (ENIL…DVLS), 445-474 (KGVE…DICA), 476-504 (DNEA…DVKA), 506-534 (DNEA…DITA), and 536-566 (NNEA…DVHA).

The chain is Putative ankyrin repeat protein L100 from Acanthamoeba polyphaga mimivirus (APMV).